A 473-amino-acid chain; its full sequence is ATP synthase subunit beta (473 aa).

An ATP-binding site is contributed by 158–165 (GGAGVGKT).

The protein belongs to the ATPase alpha/beta chains family. As to quaternary structure, F-type ATPases have 2 components, CF(1) - the catalytic core - and CF(0) - the membrane proton channel. CF(1) has five subunits: alpha(3), beta(3), gamma(1), delta(1), epsilon(1). CF(0) has three main subunits: a(1), b(2) and c(9-12). The alpha and beta chains form an alternating ring which encloses part of the gamma chain. CF(1) is attached to CF(0) by a central stalk formed by the gamma and epsilon chains, while a peripheral stalk is formed by the delta and b chains.

It localises to the cell membrane. The enzyme catalyses ATP + H2O + 4 H(+)(in) = ADP + phosphate + 5 H(+)(out). In terms of biological role, produces ATP from ADP in the presence of a proton gradient across the membrane. The catalytic sites are hosted primarily by the beta subunits. This Bacillus sp. (strain PS3) protein is ATP synthase subunit beta.